Reading from the N-terminus, the 207-residue chain is HTH-type transcriptional regulator AqdR (207 aa).

The HTH tetR-type domain occupies 16-76; the sequence is ARFRERVLDA…DALLTRTQAE (61 aa). Residues 39–58 constitute a DNA-binding region (H-T-H motif); sequence GFADVARKAGVNGVSLYRRW.

May regulate the expression of genes involved in the degradation of the Pseudomonas aeruginosa quorum sensing signal molecules HHQ (2-heptyl-4-quinolone) and PQS (2-heptyl-3-hydroxy-4-quinolone). This is HTH-type transcriptional regulator AqdR from Rhodococcus erythropolis (Arthrobacter picolinophilus).